A 285-amino-acid chain; its full sequence is Nucleotide-binding protein Cphy_0331 (285 aa).

8 to 15 (GMSGAGKS) is an ATP binding site. Residue 59–62 (DIRS) coordinates GTP.

This sequence belongs to the RapZ-like family.

Its function is as follows. Displays ATPase and GTPase activities. The sequence is that of Nucleotide-binding protein Cphy_0331 from Lachnoclostridium phytofermentans (strain ATCC 700394 / DSM 18823 / ISDg) (Clostridium phytofermentans).